Here is a 428-residue protein sequence, read N- to C-terminus: uncharacterized protein (428 aa).

12 consecutive transmembrane segments (helical) span residues 14 to 34 (LYDW…FPLF), 55 to 75 (YTIA…GTIA), 84 to 104 (FFGF…FIPS), 107 to 127 (WLLL…ANVF), 149 to 169 (FGLG…VILL), 182 to 202 (ASQL…IPMI), 238 to 258 (LFLF…IITM), 272 to 292 (SLLI…IIYG), 302 to 322 (TMLY…YFME), 324 to 344 (TLDF…IQAL), 361 to 381 (FFGF…LLIA), and 392 to 412 (TAVF…AFVP).

The protein belongs to the major facilitator superfamily.

Its subcellular location is the cell membrane. This is an uncharacterized protein from Bacillus subtilis (strain 168).